Here is a 979-residue protein sequence, read N- to C-terminus: Chromosome partition protein Smc (979 aa).

Residue 33–40 coordinates ATP; it reads PNGSGKSN. Positions 169–400 form a coiled coil; sequence SKYKLDKEEA…INILKQQFEN (232 aa). Residues 419 to 538 enclose the SMC hinge domain; that stretch reads DGYIGLASEL…DNVDNANRIA (120 aa). Coiled coils occupy residues 572 to 716 and 750 to 818; these read ILNY…HSDS and SLDL…DKII.

Belongs to the SMC family. In terms of assembly, homodimer.

Its subcellular location is the cytoplasm. Required for chromosome condensation and partitioning. The chain is Chromosome partition protein Smc from Mesomycoplasma hyorhinis (Mycoplasma hyorhinis).